Here is a 403-residue protein sequence, read N- to C-terminus: MGLRNLLDKVEHHFEKGGRYEKWYPLYEAVDTFLYRPGSVTRTTAHVRDGIDLKRMMIIVWLCTFPAMFFGMYNVGHQANLIFAQSPDLLSAQDGWRFALIGALAGFDPNSLWDCLVQGAAYFLPVYLTTFIVGGFWEVLFASIRRHEVNEGFFVTSVLFALTLPPSVPLWQVALGISFGVVLGKEVFGGTGKNFLNPALVGRAFLFFAYPAQMSGDAVWTSVDGFAGATSLSLAAAGGVDNILGHGLTWMDAFLGHMQGSMGETSTLAIFIGGAVLLLTRIASWRIVAGVMLGMVAMSYLFNAIGSASNPMFAMPWYWHLVTGGFAFGMIFMATDPVSASMTDTGKWLFGALIGVMVMLIRVVNPAFPEGMMLAILFANLFAPLIDHFVVQANIKRRLARNG.

Transmembrane regions (helical) follow at residues 56 to 76, 121 to 141, 164 to 184, 225 to 245, 260 to 280, 287 to 307, 312 to 332, 348 to 368, and 371 to 391; these read MMII…YNVG, AYFL…EVLF, LPPS…VVLG, GFAG…NILG, GSMG…LLLT, IVAG…AIGS, MFAM…GMIF, WLFG…NPAF, and GMML…HFVV. At threonine 230 the chain carries FMN phosphoryl threonine.

Belongs to the NqrB/RnfD family. In terms of assembly, composed of six subunits; NqrA, NqrB, NqrC, NqrD, NqrE and NqrF. It depends on FMN as a cofactor.

It is found in the cell inner membrane. The catalysed reaction is a ubiquinone + n Na(+)(in) + NADH + H(+) = a ubiquinol + n Na(+)(out) + NAD(+). In terms of biological role, NQR complex catalyzes the reduction of ubiquinone-1 to ubiquinol by two successive reactions, coupled with the transport of Na(+) ions from the cytoplasm to the periplasm. NqrA to NqrE are probably involved in the second step, the conversion of ubisemiquinone to ubiquinol. This is Na(+)-translocating NADH-quinone reductase subunit B from Pseudomonas aeruginosa (strain LESB58).